We begin with the raw amino-acid sequence, 328 residues long: UPF0421 protein SAR1980 (328 aa).

The next 4 membrane-spanning stretches (helical) occupy residues 19–39 (IAIFLTAVFCMALDLTPIYAI), 61–81 (LPATVIGAGFAVLFTYLFGDQ), 108–128 (VAVLTSLAMIPGIHDAYIFNF), and 132–152 (TLTAIIGLVTSGLINFMVFPP).

The protein belongs to the UPF0421 family.

The protein resides in the cell membrane. This chain is UPF0421 protein SAR1980, found in Staphylococcus aureus (strain MRSA252).